The sequence spans 167 residues: Aphrodisin (167 aa).

The signal sequence occupies residues 1–16 (MVKILVLALVFSLAHA). Glutamine 17 carries the post-translational modification Pyrrolidone carboxylic acid. 2 disulfides stabilise this stretch: cysteine 54-cysteine 58 and cysteine 73-cysteine 165. Residues asparagine 57 and asparagine 85 are each glycosylated (N-linked (GlcNAc...) asparagine).

The protein belongs to the calycin superfamily. Lipocalin family. Expressed in the vagina, uterus, and Bartholin's glands of female hamsters. Secreted in vaginal discharge.

Its subcellular location is the secreted. Acts as an aphrodisiac pheromone, reliably eliciting copulatory behavior from male hamster. The protein is Aphrodisin of Mesocricetus auratus (Golden hamster).